We begin with the raw amino-acid sequence, 282 residues long: Snake venom serine protease BmSP (282 aa).

A signal peptide spans 1–18; the sequence is MVLIGVLASLLILQLSYS. A propeptide spanning residues 19-56 is cleaved from the precursor; the sequence is KSLDDGAKESAYDDEIQQSSWGNSTVNTTLTETVVIQL. Residues asparagine 41 and asparagine 45 are each glycosylated (N-linked (GlcNAc...) asparagine). The region spanning 57–280 is the Peptidase S1 domain; sequence IMGGSECYKS…YIDWIKGIIA (224 aa). Intrachain disulfides connect cysteine 63-cysteine 195, cysteine 82-cysteine 98, cysteine 174-cysteine 241, cysteine 206-cysteine 220, and cysteine 231-cysteine 256. The active-site Charge relay system is the histidine 97. Asparagine 135 is a glycosylation site (N-linked (GlcNAc...) asparagine). The active-site Charge relay system is aspartate 142. 2 N-linked (GlcNAc...) asparagine glycosylation sites follow: asparagine 149 and asparagine 153. Residue serine 235 is the Charge relay system of the active site.

This sequence belongs to the peptidase S1 family. Snake venom subfamily. Monomer. In terms of tissue distribution, expressed by the venom gland.

It localises to the secreted. Its function is as follows. Snake venom serine protease that may act in the hemostasis system of the prey. The chain is Snake venom serine protease BmSP from Bungarus multicinctus (Many-banded krait).